A 450-amino-acid polypeptide reads, in one-letter code: Tubulin alpha-1 chain (450 aa).

Residues glutamine 11, glutamate 71, glycine 144, threonine 145, threonine 179, asparagine 206, and asparagine 228 each coordinate GTP. Glutamate 71 is a Mg(2+) binding site. Residue glutamate 254 is part of the active site.

This sequence belongs to the tubulin family. Dimer of alpha and beta chains. A typical microtubule is a hollow water-filled tube with an outer diameter of 25 nm and an inner diameter of 15 nM. Alpha-beta heterodimers associate head-to-tail to form protofilaments running lengthwise along the microtubule wall with the beta-tubulin subunit facing the microtubule plus end conferring a structural polarity. Microtubules usually have 13 protofilaments but different protofilament numbers can be found in some organisms and specialized cells. It depends on Mg(2+) as a cofactor. Post-translationally, undergoes a tyrosination/detyrosination cycle, the cyclic removal and re-addition of a C-terminal tyrosine residue by the enzymes tubulin tyrosine carboxypeptidase (TTCP) and tubulin tyrosine ligase (TTL), respectively.

It is found in the cytoplasm. The protein localises to the cytoskeleton. It carries out the reaction GTP + H2O = GDP + phosphate + H(+). In terms of biological role, tubulin is the major constituent of microtubules, a cylinder consisting of laterally associated linear protofilaments composed of alpha- and beta-tubulin heterodimers. Microtubules grow by the addition of GTP-tubulin dimers to the microtubule end, where a stabilizing cap forms. Below the cap, tubulin dimers are in GDP-bound state, owing to GTPase activity of alpha-tubulin. This chain is Tubulin alpha-1 chain (TUBA1), found in Oryza sativa subsp. japonica (Rice).